The chain runs to 368 residues: Probable magnesium transporter NIPA3 (368 aa).

Topologically, residues 1 to 18 (MASLSGSWRDAYKGMSSD) are extracellular. Residues 19–39 (NIKGLVLALSSSLFIGASFIV) form a helical membrane-spanning segment. Residues 40-66 (KKKGLKRAGASGLRAGSGGYSYLLEPL) lie on the Cytoplasmic side of the membrane. A helical transmembrane segment spans residues 67–87 (WWVGMITMIVGEIANFAAYAF). At 88–90 (APA) the chain is on the extracellular side. Residues 91 to 111 (ILVTPLGALSIIISAALAHVI) traverse the membrane as a helical segment. Residues 112 to 115 (LHEK) are Cytoplasmic-facing. The helical transmembrane segment at 116–136 (LHTFGLLGCVLCVVGSITIVL) threads the bilayer. The Extracellular segment spans residues 137–157 (HAPQEQEIDSVLQVWNLATEP). Residues 158-178 (AFLLYAAAVVGAAIILIVQFV) traverse the membrane as a helical segment. Topologically, residues 179 to 189 (PQYGQSHVMVY) are cytoplasmic. The helical transmembrane segment at 190–210 (IGVCSLVGSLSVMSVKALGIA) threads the bilayer. Residues 211-220 (LKLTFSGMNQ) are Extracellular-facing. Residues 221 to 241 (LIYPQTWVFTLIVLTCVITQM) traverse the membrane as a helical segment. At 242–255 (NYLNKALDTFNTAV) the chain is on the cytoplasmic side. A helical transmembrane segment spans residues 256-276 (VSPIYYVMFTSLTILASVIMF). Residues 277-283 (KDWDRQD) are Extracellular-facing. A helical transmembrane segment spans residues 284–304 (GTQIVTELCGFVTILSGTFLL). Residues 305–368 (HKTKDMVDGS…ILPQDGPEAV (64 aa)) are Cytoplasmic-facing.

Belongs to the NIPA (TC 2.A.7) family. In terms of assembly, homodimer.

It is found in the cell membrane. The protein resides in the early endosome. Acts as a Mg(2+) transporter. Can also transport other divalent cations such as Fe(2+), Sr(2+), Ba(2+), Mn(2+) and Co(2+) but to a much less extent than Mg(2+). The sequence is that of Probable magnesium transporter NIPA3 from Arabidopsis thaliana (Mouse-ear cress).